Here is a 252-residue protein sequence, read N- to C-terminus: tRNA pseudouridine synthase A (252 aa).

Residue Asp52 is the Nucleophile of the active site. Tyr110 serves as a coordination point for substrate.

The protein belongs to the tRNA pseudouridine synthase TruA family. In terms of assembly, homodimer.

The enzyme catalyses uridine(38/39/40) in tRNA = pseudouridine(38/39/40) in tRNA. Its function is as follows. Formation of pseudouridine at positions 38, 39 and 40 in the anticodon stem and loop of transfer RNAs. In Blochmanniella floridana, this protein is tRNA pseudouridine synthase A.